Reading from the N-terminus, the 242-residue chain is Phosphate import ATP-binding protein PstB 1 (242 aa).

Residues M1–I237 enclose the ABC transporter domain. G28–S35 provides a ligand contact to ATP.

Belongs to the ABC transporter superfamily. Phosphate importer (TC 3.A.1.7) family. As to quaternary structure, the complex is composed of two ATP-binding proteins (PstB), two transmembrane proteins (PstC and PstA) and a solute-binding protein (PstS).

It localises to the cell membrane. It catalyses the reaction phosphate(out) + ATP + H2O = ADP + 2 phosphate(in) + H(+). Functionally, part of the ABC transporter complex PstSACB involved in phosphate import. Responsible for energy coupling to the transport system. In Symbiobacterium thermophilum (strain DSM 24528 / JCM 14929 / IAM 14863 / T), this protein is Phosphate import ATP-binding protein PstB 1.